Reading from the N-terminus, the 804-residue chain is MGDFNSNEDNNNPFNNVLYNPYIVDLYDTTNNNNNNNNNNNIISGFNCDSSIFTQQISNTNNELTIPLTQSIQNLLPPVQQQTQLFISPNNNNNNNNNNNNNNNNNNNNNNNNNNNNNNNNNNNNNNNNNNNNNNNNNNNNNNNNDINTSIDINLNQLVYSTPSQQITNSVQPIYQCATQSTTSNIDTNINTINDNNNNNNNNNNNNNNSVNNNLLSMCQDPTLILQIQQLLLQQQLLQQAQQQSVPLNIQVPTTTTPINQQHQALLVPQQKQFYGNVSDNSSPETNFSYASPSSPSSTQSQSSPYEQQPLSPNPTISLSSSISVTATTTTRPNATEKTKESSLKSKSKSNEKDKEREDEEEDDDDRPKKRKKFDKNVYKGVDLGDELLEITSEEFQAYKNNFFANASDKKTVSALNYQFRKIKNRESARRSRERKATHVDELEAKIAEIEKERDNYKKENERLRMELDQYKLQEKQKSAGSIFDYISIGSPTTQNFSKNFGIILFLFLFGSFILTNTTPNFFNTNNGVINPNLVYNANSNNNNNNNNNVNRFSVNGVHSTQQYFQSQRNPLSNLDEDSLESLTASQGVFSTHFVPEQPSILLNRESIRNWATLPQNSVASLSFEKDNALKTIENANLDKSKHNVISNLNQLQQQQPSSDELMIDQKEEKNCNNNNENNNNNDNNKNSDDEKGKEIEEIKRKSTTTTISPTRYVNNSTISLLVNPTSVIGDIPDDLMKNSNVTTFGENSSFKFNFLIDTQNFPNGSNDISKAFFDNENQQMTVTSVIIAIQKSPKTPSQQPSTK.

Disordered regions lie at residues 86–148 (FISP…NDIN) and 275–371 (YGNV…PKKR). Residues 90 to 145 (NNNNNNNNNNNNNNNNNNNNNNNNNNNNNNNNNNNNNNNNNNNNNNNNNNNNNNNN) show a composition bias toward low complexity. A compositionally biased stretch (polar residues) spans 275–291 (YGNVSDNSSPETNFSYA). Residues 292 to 334 (SPSSPSSTQSQSSPYEQQPLSPNPTISLSSSISVTATTTTRPN) are compositionally biased toward low complexity. Residues 335–356 (ATEKTKESSLKSKSKSNEKDKE) are compositionally biased toward basic and acidic residues. A bZIP domain is found at 415–478 (ALNYQFRKIK…DQYKLQEKQK (64 aa)). The interval 421-436 (RKIKNRESARRSRERK) is basic motif. The leucine-zipper stretch occupies residues 443–450 (LEAKIAEI). Positions 670 to 693 (KNCNNNNENNNNNDNNKNSDDEKG) are disordered. Positions 672-685 (CNNNNENNNNNDNN) are enriched in low complexity.

This sequence belongs to the bZIP family.

The protein resides in the nucleus. Probable transcriptional regulator. This Dictyostelium discoideum (Social amoeba) protein is Probable basic-leucine zipper transcription factor C (bzpC).